The chain runs to 2085 residues: Protein MLP1 homolog (2085 aa).

Coiled-coil stretches lie at residues 44–367 (KIRE…SHDG), 399–513 (KATQ…HVLI), 568–630 (YELQ…RMKS), 675–1205 (ANEA…KRTQ), 1232–1667 (LRRE…LQQE), and 1744–1799 (EIEA…AAKE). The interval 365-398 (HDGVPGSVPQTPRANGSLLARPSSPFGTPASLRG) is disordered. The interval 934-953 (AERLRPLPTPRAPAAAEQPS) is disordered. Residues 1159–1166 (ERRQRLEQ) carry the Nuclear localization signal motif. The span at 1482–1503 (LATATEKNTSLQQQLAASSTEQ) shows a compositional bias: polar residues. Disordered stretches follow at residues 1482–1514 (LATATEKNTSLQQQLAASSTEQPAAAPVSAAPS) and 1567–1591 (SGGDVATAETSVSAQPSAGLSDEER). A compositionally biased stretch (low complexity) spans 1504-1514 (PAAAPVSAAPS). Over residues 1574–1584 (AETSVSAQPSA) the composition is skewed to polar residues. The segment at 1816-2085 (KPPAPAQAPA…GGGGGGGGNQ (270 aa)) is disordered. Pro residues predominate over residues 1817-1827 (PPAPAQAPAPA). 3 stretches are compositionally biased toward low complexity: residues 1843–1858 (VAPATAAPAAPAQAPS), 1910–1974 (QAGQ…PVPA), and 1982–1994 (ARTARGLYQAGPR). A compositionally biased stretch (gly residues) spans 1995 to 2016 (GARGGRGGGFVGAGRGAGGAAG). Positions 2028-2040 (GGATATAAAAAAA) are enriched in low complexity. 2 stretches are compositionally biased toward gly residues: residues 2041–2051 (GGAGGSAGAGN) and 2076–2085 (GGGGGGGGNQ).

As to quaternary structure, the nuclear pore complex (NPC) constitutes the exclusive means of nucleocytoplasmic transport. NPCs allow the passive diffusion of ions and small molecules and the active, nuclear transport receptor-mediated bidirectional transport of macromolecules such as proteins, RNAs, ribonucleoparticles (RNPs), and ribosomal subunits across the nuclear envelope. The 55-60 MDa NPC is composed of at least 28 different subunits: AMO1, ELYS, GLE1, GLE2, MLP1, NDC1, NIC96, NSP1, NUP133, NUP145, NUP152, NUP159, NUP170, NUP188, NUP192, NUP37, NUP49, NUP53, NUP56, NUP57, NUP82, NUP84, NUP85, POM152, POM33, POM34, SEC13 and SEH1. Due to its 8-fold rotational symmetry, all subunits are present with 8 copies or multiples thereof.

Its subcellular location is the nucleus. Involved in the structural and functional organization of perinuclear chromatin. Associates with the nuclear pore complex and form filamentous structures along the nuclear periphery. In Chaetomium thermophilum (strain DSM 1495 / CBS 144.50 / IMI 039719) (Thermochaetoides thermophila), this protein is Protein MLP1 homolog (MLP1).